Consider the following 336-residue polypeptide: HTH-type transcriptional repressor PurR (336 aa).

Residues 2–56 form the HTH lacI-type domain; sequence ATIKDVAKLAGVSTTTVSHVINKTRFVAEDTSKAVWDAIQQLNYSPSAVARSLKV. The segment at residues 4-23 is a DNA-binding region (H-T-H motif); that stretch reads IKDVAKLAGVSTTTVSHVIN. A DNA-binding region spans residues 48-56; the sequence is SAVARSLKV. The hypoxanthine site is built by tyrosine 73, lysine 188, phenylalanine 219, and aspartate 273.

As to quaternary structure, homodimer.

Its pathway is purine metabolism; purine nucleotide biosynthesis [regulation]. Its function is as follows. Is the main repressor of the genes involved in the de novo synthesis of purine nucleotides, regulating purB, purC, purEK, purF, purHD, purL, purMN and guaBA expression. PurR is allosterically activated to bind its cognate DNA by binding the purine corepressors, hypoxanthine or guanine, thereby effecting transcription repression. The protein is HTH-type transcriptional repressor PurR of Actinobacillus pleuropneumoniae serotype 5b (strain L20).